The sequence spans 282 residues: Acetyl-coenzyme A carboxylase carboxyl transferase subunit beta (282 aa).

The region spanning 25-282 (LWTKCVSCGE…SSILTMLYRP (258 aa)) is the CoA carboxyltransferase N-terminal domain. Cys-29, Cys-32, Cys-48, and Cys-51 together coordinate Zn(2+). Residues 29–51 (CVSCGETIYTKDIENNLNVCPKC) form a C4-type zinc finger.

It belongs to the AccD/PCCB family. Acetyl-CoA carboxylase is a heterohexamer composed of biotin carboxyl carrier protein (AccB), biotin carboxylase (AccC) and two subunits each of ACCase subunit alpha (AccA) and ACCase subunit beta (AccD). Zn(2+) serves as cofactor.

The protein resides in the cytoplasm. It catalyses the reaction N(6)-carboxybiotinyl-L-lysyl-[protein] + acetyl-CoA = N(6)-biotinyl-L-lysyl-[protein] + malonyl-CoA. The protein operates within lipid metabolism; malonyl-CoA biosynthesis; malonyl-CoA from acetyl-CoA: step 1/1. Its function is as follows. Component of the acetyl coenzyme A carboxylase (ACC) complex. Biotin carboxylase (BC) catalyzes the carboxylation of biotin on its carrier protein (BCCP) and then the CO(2) group is transferred by the transcarboxylase to acetyl-CoA to form malonyl-CoA. This Citrifermentans bemidjiense (strain ATCC BAA-1014 / DSM 16622 / JCM 12645 / Bem) (Geobacter bemidjiensis) protein is Acetyl-coenzyme A carboxylase carboxyl transferase subunit beta.